Here is a 177-residue protein sequence, read N- to C-terminus: UPF0114 protein jhp_0175 (177 aa).

3 consecutive transmembrane segments (helical) span residues 15–35 (WLLAPLCIAMSLVLVVLGYVF), 54–74 (LVLSALGLVDLLFMAGLVLMV), and 145–165 (PIFWQVVIHLVFVCSALLTAV).

This sequence belongs to the UPF0114 family.

It localises to the cell membrane. This is UPF0114 protein jhp_0175 from Helicobacter pylori (strain J99 / ATCC 700824) (Campylobacter pylori J99).